The following is a 207-amino-acid chain: Small ribosomal subunit protein uS10m (207 aa).

The N-terminal 24 residues, 1–24 (MLSVFGLRTVARCNSTLASGGARA), are a transit peptide targeting the mitochondrion.

It belongs to the universal ribosomal protein uS10 family. As to quaternary structure, part of the mitochondrial small ribosomal subunit.

It is found in the mitochondrion. In terms of biological role, involved in mitochondrial genome encoded proteins translation. Involved in the binding of tRNA to the ribosomes. The chain is Small ribosomal subunit protein uS10m (RSM10) from Eremothecium gossypii (strain ATCC 10895 / CBS 109.51 / FGSC 9923 / NRRL Y-1056) (Yeast).